A 1116-amino-acid chain; its full sequence is Eukaryotic translation initiation factor 2-alpha kinase 3 (1116 aa).

A signal peptide spans 1–29; that stretch reads MERAISPGLLVRALLLLLLLLGLAARTVA. Topologically, residues 30-514 are lumenal; that stretch reads AGRARGLPAP…HYNKNIRKKD (485 aa). Residues 77–101 form a disordered region; that stretch reads ALPAAAGEQEPRGPEPDDETELRPR. A glycan (N-linked (GlcNAc...) asparagine) is linked at N258. Residues 515-535 form a helical membrane-spanning segment; sequence PVLLLHWWKEIVATILFCIIA. Residues 536–1116 are Cytoplasmic-facing; it reads TTFIVRRLFH…NNSHSPLPSN (581 aa). The tract at residues 550–571 is disordered; that stretch reads RQRKESETQCQTENKYDSVSGE. The region spanning 593 to 1077 is the Protein kinase domain; that stretch reads FEPIQCLGRG…AINIIENAVF (485 aa). ATP is bound at residue 599-607; that stretch reads LGRGGFGVV. Y619 is subject to Phosphotyrosine; by autocatalysis. Residue K622 participates in ATP binding. The insert loop stretch occupies residues 647 to 888; that stretch reads EHPGIVRYFN…SPKVYLYIQM (242 aa). S715 is modified (phosphoserine). T802 bears the Phosphothreonine mark. The segment at 841 to 863 is disordered; it reads KPTSSKSSSEATLSISPPRPTTL. Positions 844–856 are enriched in low complexity; the sequence is SSKSSSEATLSIS. D937 serves as the catalytic Proton acceptor. T982 is modified (phosphothreonine). A disordered region spans residues 1090–1116; that stretch reads QRSRSLSSSGTKHSRQSNNSHSPLPSN. S1094 is subject to Phosphoserine. Residues 1105 to 1116 show a composition bias toward polar residues; that stretch reads QSNNSHSPLPSN.

Belongs to the protein kinase superfamily. Ser/Thr protein kinase family. GCN2 subfamily. In terms of assembly, forms dimers with HSPA5/BIP in resting cells. Homotetramerizes in response to endoplasmic reticulum (ER) stress, leading to its activation. Interacts with HSP90B1/GRP94. Interacts with DNAJC3; inhibiting EIF2AK3/PERK activity. Interacts with ATAD3A; ATAD3A and EIF2S1/eIF-2-alpha occupy a common binding site within the cytoplasmic loop of EIF2AK3/PERK, leading to prevent EIF2AK3/PERK association with its substrate EIF2S1/eIF-2-alpha. Interacts with MFN2. Interacts with TMEM33. Interacts with PDIA6. Interacts with LACC1. Oligomerization of the N-terminal ER luminal domain by ER stress promotes EIF2AK3/PERK trans-autophosphorylation of the C-terminal cytoplasmic kinase domain at multiple residues including Thr-982 on the kinase activation loop. Autophosphorylated at Tyr-619 following endoplasmic reticulum stress, leading to activate its activity. Dephosphorylated at Tyr-619 by PTPN1/PTP1B, leading to inactivate its enzyme activity. Phosphorylation at Thr-802 by AKT (AKT1, AKT2 and/or AKT3) inactivates EIF2AK3/PERK. Post-translationally, ADP-ribosylated by PARP16 upon ER stress, which increases kinase activity. As to expression, ubiquitous. A high level expression is seen in secretory tissues.

It is found in the endoplasmic reticulum membrane. The enzyme catalyses L-seryl-[protein] + ATP = O-phospho-L-seryl-[protein] + ADP + H(+). It carries out the reaction L-threonyl-[protein] + ATP = O-phospho-L-threonyl-[protein] + ADP + H(+). It catalyses the reaction L-tyrosyl-[protein] + ATP = O-phospho-L-tyrosyl-[protein] + ADP + H(+). Inhibited by HSPA5/BIP in absence of stress. Perturbation in protein folding in the endoplasmic reticulum (ER) promotes reversible dissociation from HSPA5/BIP and oligomerization, resulting in trans-autophosphorylation and kinase activity induction. Inactivated following phosphorylation at Thr-802 by AKT (AKT1, AKT2 and/or AKT3). Inhibited by ATAD3A at mitochondria-endoplasmic reticulum contact sites, providing a safe haven for mitochondrial protein translation during ER stress. Functionally, metabolic-stress sensing protein kinase that phosphorylates the alpha subunit of eukaryotic translation initiation factor 2 (EIF2S1/eIF-2-alpha) in response to various stress, such as unfolded protein response (UPR). Key effector of the integrated stress response (ISR) to unfolded proteins: EIF2AK3/PERK specifically recognizes and binds misfolded proteins, leading to its activation and EIF2S1/eIF-2-alpha phosphorylation. EIF2S1/eIF-2-alpha phosphorylation in response to stress converts EIF2S1/eIF-2-alpha in a global protein synthesis inhibitor, leading to a global attenuation of cap-dependent translation, while concomitantly initiating the preferential translation of ISR-specific mRNAs, such as the transcriptional activators ATF4 and QRICH1, and hence allowing ATF4- and QRICH1-mediated reprogramming. The EIF2AK3/PERK-mediated unfolded protein response increases mitochondrial oxidative phosphorylation by promoting ATF4-mediated expression of COX7A2L/SCAF1, thereby increasing formation of respiratory chain supercomplexes. In contrast to most subcellular compartments, mitochondria are protected from the EIF2AK3/PERK-mediated unfolded protein response due to EIF2AK3/PERK inhibition by ATAD3A at mitochondria-endoplasmic reticulum contact sites. In addition to EIF2S1/eIF-2-alpha, also phosphorylates NFE2L2/NRF2 in response to stress, promoting release of NFE2L2/NRF2 from the BCR(KEAP1) complex, leading to nuclear accumulation and activation of NFE2L2/NRF2. Serves as a critical effector of unfolded protein response (UPR)-induced G1 growth arrest due to the loss of cyclin-D1 (CCND1). Involved in control of mitochondrial morphology and function. In Homo sapiens (Human), this protein is Eukaryotic translation initiation factor 2-alpha kinase 3.